Consider the following 150-residue polypeptide: Calmodulin-like protein 7 (150 aa).

4 consecutive EF-hand domains span residues 1–36 (MDPT…LGIY), 37–72 (IPDK…IMDE), 75–110 (EEEE…LGLK), and 113–148 (KTLD…GGFN). Ca(2+) is bound by residues aspartate 14, asparagine 16, aspartate 18, threonine 20, glutamate 25, aspartate 50, asparagine 52, aspartate 54, cysteine 56, glutamate 61, aspartate 88, asparagine 90, aspartate 92, glutamate 99, aspartate 126, aspartate 128, aspartate 130, arginine 132, and glutamate 137.

The protein belongs to the calmodulin family.

In terms of biological role, potential calcium sensor. This is Calmodulin-like protein 7 (CML7) from Arabidopsis thaliana (Mouse-ear cress).